A 394-amino-acid polypeptide reads, in one-letter code: Dual specificity protein phosphatase 4 (394 aa).

Val2 carries the post-translational modification N-acetylvaline. The Rhodanese domain maps to 41 to 159 (SGGKCLLLDC…FSSEYPEFCS (119 aa)). One can recognise a Tyrosine-protein phosphatase domain in the interval 195–336 (GPVEILPFLY…LLQFESQVLA (142 aa)). Catalysis depends on Cys280, which acts as the Phosphocysteine intermediate. 2 positions are modified to phosphoserine; by MAPK: Ser386 and Ser391.

It belongs to the protein-tyrosine phosphatase family. Non-receptor class dual specificity subfamily. Hollow spherical complex composed of 24 subunits with pseudooctahedral symmetry, has a tetramer as the basic unit. In terms of processing, phosphorylation in the C-terminus by ERK1/2 inhibits proteasomal degradation and stabilizes the protein.

It is found in the nucleus. It catalyses the reaction O-phospho-L-tyrosyl-[protein] + H2O = L-tyrosyl-[protein] + phosphate. The enzyme catalyses O-phospho-L-seryl-[protein] + H2O = L-seryl-[protein] + phosphate. The catalysed reaction is O-phospho-L-threonyl-[protein] + H2O = L-threonyl-[protein] + phosphate. Regulates mitogenic signal transduction by dephosphorylating both Thr and Tyr residues on MAP kinases ERK1 and ERK2. This is Dual specificity protein phosphatase 4 (DUSP4) from Homo sapiens (Human).